The following is a 125-amino-acid chain: Large ribosomal subunit protein bL12 (125 aa).

Belongs to the bacterial ribosomal protein bL12 family. In terms of assembly, homodimer. Part of the ribosomal stalk of the 50S ribosomal subunit. Forms a multimeric L10(L12)X complex, where L10 forms an elongated spine to which 2 to 4 L12 dimers bind in a sequential fashion. Binds GTP-bound translation factors.

In terms of biological role, forms part of the ribosomal stalk which helps the ribosome interact with GTP-bound translation factors. Is thus essential for accurate translation. This chain is Large ribosomal subunit protein bL12, found in Thermoanaerobacter pseudethanolicus (strain ATCC 33223 / 39E) (Clostridium thermohydrosulfuricum).